The following is a 291-amino-acid chain: N-acetylmannosamine kinase (291 aa).

ATP contacts are provided by residues 5–12 (AIDIGGTK) and 132–139 (GVGGGVVS). Positions 156, 166, 168, and 173 each coordinate Zn(2+).

This sequence belongs to the ROK (NagC/XylR) family. NanK subfamily. As to quaternary structure, homodimer.

The catalysed reaction is an N-acyl-D-mannosamine + ATP = an N-acyl-D-mannosamine 6-phosphate + ADP + H(+). Its pathway is amino-sugar metabolism; N-acetylneuraminate degradation; D-fructose 6-phosphate from N-acetylneuraminate: step 2/5. Its function is as follows. Catalyzes the phosphorylation of N-acetylmannosamine (ManNAc) to ManNAc-6-P. In Escherichia coli (strain SMS-3-5 / SECEC), this protein is N-acetylmannosamine kinase.